A 536-amino-acid chain; its full sequence is MEQEENHSADHLSAQPGNGNELEESSVKERCFEQREALVGEPRCVICGRYGEYICDQTDDDICSVECKTILLSKLSAETRPVVKAAKRVNLPVGDESFCIRDENFPKIPSMHDGQIASLRSKLDICVKGEDVPDPIMCFSSSGLPEKLVLNLEAAGYVMPTPVQMQVIPSSICNRSLLVSADTGSGKTASFLVPIIAHCSHVRSERCTDKQGPLAIVLAPTRELCLQVEEQAKVLGKGLPFKTALVVGGDPLAQQIYRIENGIELIVGTPGRLIDLLMKHNVDLNKVDVFVLDEVDCLLERGFRDQVMQIFQALSHPQVMMFSATVNSEVEKMSNSLAKNAIHISCGNPSRPNKSVKQVVIWVESKQKKQKIFEIMTSKQHFKPPAVVFVSSRIGADLLSEAITVATGLKVVSIHGDKTMNERRESLRRFLTGEVSVVVCTGVLGRGMDLLKVRQVILFDMPNSIDEYVHQVGRASRMGVEGMAIVFVNEEDRNLFRELVQILKTAGAPIPRELANSKYTTGIPLGGGKKRKLKSR.

Basic and acidic residues predominate over residues 1-10 (MEQEENHSAD). The interval 1–25 (MEQEENHSADHLSAQPGNGNELEES) is disordered. Residues 40–69 (GEPRCVICGRYGEYICDQTDDDICSVECKT) form an HIT-type zinc finger. Residues 137–165 (MCFSSSGLPEKLVLNLEAAGYVMPTPVQM) carry the Q motif motif. The Helicase ATP-binding domain maps to 168–344 (IPSSICNRSL…NSLAKNAIHI (177 aa)). 181-188 (ADTGSGKT) contributes to the ATP binding site. A DEAD box motif is present at residues 293-296 (DEVD). One can recognise a Helicase C-terminal domain in the interval 355–518 (SVKQVVIWVE…PIPRELANSK (164 aa)).

The protein belongs to the DEAD box helicase family. DDX59 subfamily.

The enzyme catalyses ATP + H2O = ADP + phosphate + H(+). The chain is DEAD-box ATP-dependent RNA helicase 41 from Oryza sativa subsp. japonica (Rice).